We begin with the raw amino-acid sequence, 105 residues long: MSTKNKKAAGGNGGAPKQTRQQSHDSQDYSSFKTVLFYCMLIVFLPVLTFFVLKGFVLDQFLDISEVKVNIASAVGAVVALHIALGLYIYRAYFGTTGSKASKTD.

The disordered stretch occupies residues 1-26 (MSTKNKKAAGGNGGAPKQTRQQSHDS). The Cytoplasmic portion of the chain corresponds to 1–36 (MSTKNKKAAGGNGGAPKQTRQQSHDSQDYSSFKTVL). The helical transmembrane segment at 37 to 57 (FYCMLIVFLPVLTFFVLKGFV) threads the bilayer. Residues 58 to 68 (LDQFLDISEVK) lie on the Lumenal side of the membrane. A helical membrane pass occupies residues 69–89 (VNIASAVGAVVALHIALGLYI). Residues 90–105 (YRAYFGTTGSKASKTD) lie on the Cytoplasmic side of the membrane.

It belongs to the VMA21 family.

The protein resides in the endoplasmic reticulum membrane. The protein localises to the endoplasmic reticulum-Golgi intermediate compartment membrane. It localises to the cytoplasmic vesicle. It is found in the COPII-coated vesicle membrane. Its function is as follows. Required for the assembly of the V0 complex of the vacuolar ATPase (V-ATPase) in the endoplasmic reticulum. This Drosophila erecta (Fruit fly) protein is Vacuolar ATPase assembly integral membrane protein VMA21 homolog.